Here is a 230-residue protein sequence, read N- to C-terminus: MQTSFVALLAVAASLASALPHGGNSYEASLPEPTNLPEPTKLPEPVEGPYKPKPPILPEPIKDNYKPKTPILPEHVEGPYKPKLPEPTTGDPKNNTLPVPTCVDGKIKTHKVKSGESLTTIAEKYDTGICNIAKLNNLADPNFVDLNQDLQIPTDACEKDNTSCIKPDGTATCVKDGKKDGKDIYSVVSGDTLTSIAQALQITLQSLKDANPGVVPEHLNVGQKLNVPVC.

Positions 1 to 18 are cleaved as a signal peptide; the sequence is MQTSFVALLAVAASLASA. Residues 20-102 form a disordered region; the sequence is PHGGNSYEAS…KNNTLPVPTC (83 aa). Repeat copies occupy residues 30–33, 36–39, 42–45, 46–49, 50–53, 57–60, 65–68, 76–79, 80–83, and 84–87. Positions 30 to 87 are 5 X 4 AA repeats of L-P-E-P; that stretch reads LPEPTNLPEPTKLPEPVEGPYKPKPPILPEPIKDNYKPKTPILPEHVEGPYKPKLPEP. The interval 46–87 is 2 X 4 AA repeats of V-E-G-P; sequence VEGPYKPKPPILPEPIKDNYKPKTPILPEHVEGPYKPKLPEP. The 3 X 4 AA repeats of Y-K-P-K stretch occupies residues 50–83; sequence YKPKPPILPEPIKDNYKPKTPILPEHVEGPYKPK. The span at 74-84 shows a compositional bias: basic and acidic residues; it reads EHVEGPYKPKL. Asparagine 94 carries N-linked (GlcNAc...) asparagine glycosylation. The 45-residue stretch at 108–152 folds into the LysM 1 domain; sequence KTHKVKSGESLTTIAEKYDTGICNIAKLNNLADPNFVDLNQDLQI. Asparagine 161 is a glycosylation site (N-linked (GlcNAc...) asparagine). The LysM 2 domain occupies 183–227; sequence DIYSVVSGDTLTSIAQALQITLQSLKDANPGVVPEHLNVGQKLNV.

In terms of assembly, forms a multimeric structure. Post-translationally, N-glycosylated and may be O-glycosylated. As to expression, expressed in penetration hyphae, infection vesicles and primary hyphae (intracellular hyphae).

It is found in the secreted. Its subcellular location is the cell wall. Functionally, may have roles in host-pathogen interaction, including establishment and maintenance of biotrophy, prevention of host recognition of the fungus and a barrier to host defense molecules. This Colletotrichum lindemuthianum (Bean anthracnose fungus) protein is Intracellular hyphae protein 1 (CIH1).